We begin with the raw amino-acid sequence, 185 residues long: Elongation factor P (185 aa).

Belongs to the elongation factor P family.

Its subcellular location is the cytoplasm. It participates in protein biosynthesis; polypeptide chain elongation. Involved in peptide bond synthesis. Stimulates efficient translation and peptide-bond synthesis on native or reconstituted 70S ribosomes in vitro. Probably functions indirectly by altering the affinity of the ribosome for aminoacyl-tRNA, thus increasing their reactivity as acceptors for peptidyl transferase. This Streptococcus equi subsp. equi (strain 4047) protein is Elongation factor P.